We begin with the raw amino-acid sequence, 360 residues long: Serine/threonine-protein phosphatase 2A activator 2 (360 aa).

Belongs to the PTPA-type PPIase family.

The protein localises to the cytoplasm. The enzyme catalyses [protein]-peptidylproline (omega=180) = [protein]-peptidylproline (omega=0). Functionally, PPIases accelerate the folding of proteins. It catalyzes the cis-trans isomerization of proline imidic peptide bonds in oligopeptides. Acts as a regulatory subunit for PP2A-like phosphatases modulating their activity or substrate specificity, probably by inducing a conformational change in the catalytic subunit, a direct target of the PPIase. Can reactivate inactive phosphatase PP2A-phosphatase methylesterase complexes (PP2Ai) in presence of ATP and Mg(2+) by dissociating the inactive form from the complex. This chain is Serine/threonine-protein phosphatase 2A activator 2 (RRD2), found in Kluyveromyces lactis (strain ATCC 8585 / CBS 2359 / DSM 70799 / NBRC 1267 / NRRL Y-1140 / WM37) (Yeast).